The sequence spans 172 residues: 3-hydroxydecanoyl-[acyl-carrier-protein] dehydratase (172 aa).

Histidine 71 is an active-site residue.

This sequence belongs to the thioester dehydratase family. FabA subfamily. Homodimer.

It localises to the cytoplasm. It carries out the reaction a (3R)-hydroxyacyl-[ACP] = a (2E)-enoyl-[ACP] + H2O. The catalysed reaction is (3R)-hydroxydecanoyl-[ACP] = (2E)-decenoyl-[ACP] + H2O. The enzyme catalyses (2E)-decenoyl-[ACP] = (3Z)-decenoyl-[ACP]. It functions in the pathway lipid metabolism; fatty acid biosynthesis. Necessary for the introduction of cis unsaturation into fatty acids. Catalyzes the dehydration of (3R)-3-hydroxydecanoyl-ACP to E-(2)-decenoyl-ACP and then its isomerization to Z-(3)-decenoyl-ACP. Can catalyze the dehydratase reaction for beta-hydroxyacyl-ACPs with saturated chain lengths up to 16:0, being most active on intermediate chain length. This is 3-hydroxydecanoyl-[acyl-carrier-protein] dehydratase from Edwardsiella ictaluri (strain 93-146).